A 425-amino-acid chain; its full sequence is Trigger factor (425 aa).

The 74-residue stretch at 158 to 231 (GDLVRISMEV…VQEVYRRTLP (74 aa)) folds into the PPIase FKBP-type domain.

It belongs to the FKBP-type PPIase family. Tig subfamily.

Its subcellular location is the cytoplasm. The enzyme catalyses [protein]-peptidylproline (omega=180) = [protein]-peptidylproline (omega=0). Functionally, involved in protein export. Acts as a chaperone by maintaining the newly synthesized protein in an open conformation. Functions as a peptidyl-prolyl cis-trans isomerase. In Thermotoga neapolitana (strain ATCC 49049 / DSM 4359 / NBRC 107923 / NS-E), this protein is Trigger factor.